We begin with the raw amino-acid sequence, 279 residues long: Energy-coupling factor transporter ATP-binding protein EcfA1 (279 aa).

The region spanning 5-240 (IELNNIQFNY…GEALVEMGLD (236 aa)) is the ABC transporter domain. Residue 40–47 (GHNGSGKS) coordinates ATP.

Belongs to the ABC transporter superfamily. Energy-coupling factor EcfA family. In terms of assembly, forms a stable energy-coupling factor (ECF) transporter complex composed of 2 membrane-embedded substrate-binding proteins (S component), 2 ATP-binding proteins (A component) and 2 transmembrane proteins (T component).

It is found in the cell membrane. Functionally, ATP-binding (A) component of a common energy-coupling factor (ECF) ABC-transporter complex. Unlike classic ABC transporters this ECF transporter provides the energy necessary to transport a number of different substrates. The sequence is that of Energy-coupling factor transporter ATP-binding protein EcfA1 from Enterococcus faecalis (strain ATCC 700802 / V583).